A 207-amino-acid polypeptide reads, in one-letter code: Small ribosomal subunit protein uS2 (207 aa).

It belongs to the universal ribosomal protein uS2 family.

The polypeptide is Small ribosomal subunit protein uS2 (Nitrosopumilus maritimus (strain SCM1)).